The following is an 84-amino-acid chain: Large ribosomal subunit protein bL31B (84 aa).

This sequence belongs to the bacterial ribosomal protein bL31 family. Type B subfamily. Part of the 50S ribosomal subunit.

Binds the 23S rRNA. In Rhodococcus jostii (strain RHA1), this protein is Large ribosomal subunit protein bL31B.